Reading from the N-terminus, the 2062-residue chain is Unconventional myosin-X (2062 aa).

Methionine 1 carries the N-acetylmethionine modification. One can recognise a Myosin motor domain in the interval 63–739 (EGVDDMASLA…LEQKLEKRRE (677 aa)). Residues asparagine 104, tyrosine 113, 160–165 (GAGKTE), and asparagine 215 each bind ATP. The actin-binding stretch occupies residues 619 to 641 (LHSLMATLSSSNPFFVRCIKPNT). 3 consecutive IQ domains span residues 742–771 (IDRAAMVIRAHILGYLARKQYRKVLCGVVT), 765–794 (VLCGVVTIQKNYRAFLARKKFLHLKKAAIV), and 788–817 (LKKAAIVFQKQLRGQLARRVYRQLLAEKRE). Residues 814–882 (EKRELEEKKR…LTRELEKQRE (69 aa)) form an SAH region. The disordered stretch occupies residues 822 to 844 (KRREEEKKREEEERERERAQREA). Positions 883–933 (NKQVEEILRLEKEIEDLQRMKERQELSLTEASLQKLQQLRDEELRRLEDEA) form a coiled coil. Serine 961, serine 964, and serine 967 each carry phosphoserine. Disordered stretches follow at residues 963 to 1047 (GSEI…VVPT) and 1062 to 1089 (QDSASLHNSSSGESTYCMPQNNGDLPSP). Positions 993–1007 (AEEEVDEGFEADDDA) are enriched in acidic residues. Residues 1062–1085 (QDSASLHNSSSGESTYCMPQNNGD) are compositionally biased toward polar residues. Phosphothreonine is present on threonine 1162. PH domains lie at 1216 to 1314 (EALK…QVHS) and 1396 to 1501 (EFIV…NVTD). One can recognise a MyTH4 domain in the interval 1551–1699 (LPYGDINLNL…PSRDEIEALI (149 aa)). The region spanning 1704 to 2048 (MTSTVYCHGG…AYISMIVKKR (345 aa)) is the FERM domain.

This sequence belongs to the TRAFAC class myosin-kinesin ATPase superfamily. Myosin family. Monomer, when in an inactive conformation in the cytosol. Homodimer in its active, membrane-bound conformation; antiparallel coiled coil-mediated dimer formation. Interacts with ECPAS. Interacts with DCC and ITGB5; the presence of DCC inhibits ITGB5 binding. Interacts with tubulin; ITGB5 or DCC binding inhibits tubulin binding. Interacts strongly with CALM3 and weakly with CALM, the CALM3 interaction is essential for function in filopodial extension and motility. Interacts with ITGB1, ITGB3 and ITGB5. Interacts with NEO1. Interacts with VASP. Post-translationally, the initiator methionine for isoform Headless is removed. In terms of tissue distribution, detected in brain, heart, kidney, liver, stomach, skeletal muscle, lung, testis and skin. Isoform Headless is expressed in embryonic and neuronal stem cells, and enriched in proliferating and migrating cells.

The protein resides in the cytoplasm. Its subcellular location is the cytosol. The protein localises to the cell projection. It localises to the lamellipodium. It is found in the ruffle. The protein resides in the cytoskeleton. Its subcellular location is the filopodium tip. The protein localises to the cell cortex. It localises to the filopodium membrane. In terms of biological role, myosins are actin-based motor molecules with ATPase activity. Unconventional myosins serve in intracellular movements. MYO10 binds to actin filaments and actin bundles and functions as a plus end-directed motor. Moves with higher velocity and takes larger steps on actin bundles than on single actin filaments. The tail domain binds to membranous compartments containing phosphatidylinositol 3,4,5-trisphosphate or integrins, and mediates cargo transport along actin filaments. Regulates cell shape, cell spreading and cell adhesion. Stimulates the formation and elongation of filopodia. In hippocampal neurons it induces the formation of dendritic filopodia by trafficking the actin-remodeling protein VASP to the tips of filopodia, where it promotes actin elongation. Plays a role in formation of the podosome belt in osteoclasts. Its function is as follows. Functions as a dominant-negative regulator of isoform 1, suppressing its filopodia-inducing and axon outgrowth-promoting activities. In hippocampal neurons, it increases VASP retention in spine heads to induce spine formation and spine head expansion. This is Unconventional myosin-X (Myo10) from Mus musculus (Mouse).